The chain runs to 334 residues: Cell division protein ZipA (334 aa).

Residues 1 to 2 (ME) lie on the Periplasmic side of the membrane. The chain crosses the membrane as a helical span at residues 3–23 (LHIIFLILGGLLIVLLAGFSI). The Cytoplasmic portion of the chain corresponds to 24–334 (YSARREKSRI…DRQAYFARVS (311 aa)).

The protein belongs to the ZipA family. Interacts with FtsZ via their C-terminal domains.

It is found in the cell inner membrane. Essential cell division protein that stabilizes the FtsZ protofilaments by cross-linking them and that serves as a cytoplasmic membrane anchor for the Z ring. Also required for the recruitment to the septal ring of downstream cell division proteins. This chain is Cell division protein ZipA, found in Haemophilus ducreyi (strain 35000HP / ATCC 700724).